The primary structure comprises 455 residues: Chitin deacetylase 2 (455 aa).

Residues 1-19 form the signal peptide; the sequence is MIPSTAAALLTLTAGAAFA. Residues N86, N98, N122, and N142 are each glycosylated (N-linked (GlcNAc...) asparagine). The 191-residue stretch at 157–347 folds into the NodB homology domain; the sequence is MTWGLGFDDG…IKSAFNYIVP (191 aa). D164 serves as the catalytic Proton acceptor. D164 contacts acetate. D165 provides a ligand contact to Co(2+). N-linked (GlcNAc...) asparagine glycosylation is present at N168. 2 residues coordinate Co(2+): H214 and H218. Residue Y255 participates in acetate binding. N-linked (GlcNAc...) asparagine glycosylation is found at N270 and N308. Residue H321 is the Proton donor of the active site. Residues N325, N353, N362, and N377 are each glycosylated (N-linked (GlcNAc...) asparagine). A disordered region spans residues 381–423; the sequence is STTQKDGSSSTNTASGSGAAGSASATSSSDDSSSSGGSSGSSG. Residue N426 is glycosylated (N-linked (GlcNAc...) asparagine). The GPI-anchor amidated serine moiety is linked to residue S429. Residues 430-455 constitute a propeptide, removed in mature form; it reads GALGMFDSLSGVGLILGGVVAGVMLL.

This sequence belongs to the polysaccharide deacetylase family. Co(2+) is required as a cofactor. Post-translationally, the GPI anchor is required for the attachment to the cell membrane but not for cell surface targeting.

It localises to the secreted. The protein localises to the cell wall. It is found in the cell membrane. It catalyses the reaction [(1-&gt;4)-N-acetyl-beta-D-glucosaminyl](n) + n H2O = chitosan + n acetate. Hydrolyzes the N-acetamido groups of N-acetyl-D-glucosamine residues in chitin to form chitosan and acetate. Chitosan is required to anchor melanin to the cell wall, for maintenance of cell wall integrity, and for proper cytokinesis. Chitosan offers an advantage during infection as it is less readily detected than chitin by host immunosurveillance mechanisms. The chain is Chitin deacetylase 2 from Cryptococcus neoformans var. grubii serotype A (strain H99 / ATCC 208821 / CBS 10515 / FGSC 9487) (Filobasidiella neoformans var. grubii).